The chain runs to 321 residues: N-acetyllactosaminide alpha-1,3-galactosyltransferase-like 1 (321 aa).

Residues 1 to 6 lie on the Cytoplasmic side of the membrane; that stretch reads MQYKKE. The helical; Signal-anchor for type II membrane protein transmembrane segment at 7–24 threads the bilayer; the sequence is TLLLILLAILLALTQRYS. At 25 to 321 the chain is on the lumenal side; that stretch reads RTKDHLQKMY…IKVAWQPRIT (297 aa). N-linked (GlcNAc...) asparagine glycosylation is found at Asn87 and Asn99. Residues 95–100, 187–189, and 209–212 contribute to the substrate site; these read FATGNF, TAN, and HAWW. Glu277 functions as the Nucleophile in the catalytic mechanism.

The protein belongs to the glycosyltransferase 6 family. It depends on Mn(2+) as a cofactor.

Its subcellular location is the golgi apparatus. The protein resides in the golgi stack membrane. It catalyses the reaction a beta-D-galactosyl-(1-&gt;4)-N-acetyl-beta-D-glucosaminyl derivative + UDP-alpha-D-galactose = an alpha-D-galactosyl-(1-&gt;3)-beta-D-galactosyl-(1-&gt;4)-N-acetyl-beta-D-glucosaminyl derivative + UDP + H(+). It functions in the pathway protein modification; protein glycosylation. Synthesizes the galactose-alpha(1,3)-galactose group by catalyzing the transfer of a galactose residue, with an alpha-1,3 linkage, on terminal lactosaminide (Gal-beta-1,4-GlcNAc-R) disaccharide borne by a glycoprotein or a glycolipid. This Rattus norvegicus (Rat) protein is N-acetyllactosaminide alpha-1,3-galactosyltransferase-like 1 (Ggta1l1).